Reading from the N-terminus, the 1597-residue chain is MAEQTLLSKLNALSQKVIPPASPSQASILTEEVIRNWPERSKTLCSDFTALESNDEKEDWLRTLFIELFDFINKNDENSPLKLSDVASFTNELVNHERQVSQASIVGKMFIAVSSTVPNINDLTTISLCKLIPSLHEELFKFSWISSKLLNKEQTTLLRHLLKKSKYELKKYNLLVENSVGYGQLVALLILAYYDPDNFSKVSAYLKEIYHIMGKYSLDSIRTLDVILNVSSQFITEGYKFFIALLRKSDSWPSSHVANNSNYSSLNEGGNMIAANIISFNLSQYNEEVDKENYERYMDMCCILLKNGFVNFYSIWDNVKPEMEFLQEYIQNLETELEEESTKGVENPLAMAAALSTENETDEDNALVVNDDVNMKDKISEETNADIESKGKQKTQQDILLFGKIKLLERLLIHGCVIPVIHVLKQYPKVLYVSESLSRYLGRVFEYLLNPLYTSMTSSGESKDMATALMITRIDNGILAHKPRLIHKYKTHEPFESLELNSSYVFYYSEWNSNLTPFASVNDLFENSHIYLSIIGPYLGRIPTLLSKISRIGVADIQKNHGSESLHVTIDKWIDYVRKFIFPATSLLQNNPIATSEVYELMKFFPFEKRYFIYNEMMTKLSQDILPLKVSFNKAEREAKSILKALSIDTIAKESRRFAKLISTNPLASLVPAVKQIENYDKVSELVVYTTKYFNDFAYDVLQFVLLLRLTYNRPAVQFDGVNQAMWVQRLSIFIAGLAKNCPNMDISNIITYILKTLHNGNIIAVSILKELIITVGGIRDLNEVNMKQLLMLNSGSPLKQYARHLIYDFRDDNSVISSRLTSFFTDQSAISEIILLLYTLNLKANTQNSHYKILSTRCDEMNTLLWSFIELIKHCLKGKAFEENVLPFVELNNRFHLSTPWTFHIWRDYLDNQLNSNENFSIDELIEGAEFSDVDLTKISKDLFTTFWRLSLYDIHFDKSLYDERKNALSGENTGHMSNRKKHLIQNQIKDILVTGISHQRAFKKTSEFISEKSNVWNKDCGEDQIKIFLQNCVVPRVLFSPSDALFSSFFIFMAFRTENLMSILNTCITSNILKTLLFCCTSSEAGNLGLFFTDVLKKLEKMRLNGDFNDQASRKLYEWHSVITEQVIDLLSEKNYMSIRNGIEFMKHVTSVFPVVKAHIQLVYTTLEENLINEEREDIKLPSSALIGHLKARLKDALELDEFCTLTEEEAEQKRIREMELEEIKNYETACQNEQKQVALRKQLELNKSQRLQNDPPKSVASGSAGLNSKDRYTYSRNEPVIPTKPSSSQWSYSKVTRHVDDINHYLATNHLQKAISLVENDDETRNLRKLSKQNMPIFDFRNSTLEIFERYFRTLIQNPQNPDFAEKIDSLKRYIKNISREPYPDTTSSYSEAAAPEYTKRSSRYSGNAGGKDGYGSSNYRGPSNDRSAPKNIKPISSYAHKRSELPTRPSKSKTYNDRSRALRPTGPDRGDGFDQRDNRLREEYKKNSSQRSQLRFPEKPFQEGKDSSKANPYQASSYKRDSPSENEEKPNKRFKKDETIRNKFQTQDYRNTRDSGAAHRANENQRYNGNRKSNTQALPQGPKGGNYVSRYQR.

Disordered stretches follow at residues 1250–1274 and 1384–1597; these read KSQR…SKDR and EPYP…RYQR. Polar residues predominate over residues 1419 to 1430; that stretch reads GSSNYRGPSNDR. Composition is skewed to basic and acidic residues over residues 1458–1490, 1500–1512, 1522–1545, and 1554–1567; these read TYND…EYKK, FPEK…KDSS, YKRD…ETIR, and RNTR…RANE. Residues 1568 to 1582 are compositionally biased toward polar residues; it reads NQRYNGNRKSNTQAL.

Belongs to the THOC2 family. In terms of assembly, component of the THO complex, which is composed of HPR1, MFT1, THO2 and THP2. Together with SUB2, TEX1 and YRA1, THO forms the transcription/export (TREX) complex. THO associates with DNA and RNA in vitro.

It is found in the nucleus. In terms of biological role, component the THO subcomplex of the TREX complex, which operates in coupling transcription elongation to mRNA export. The THO complex is recruited to transcribed genes and moves along the gene with the elongating polymerase during transcription. THO is important for stabilizing nascent RNA in the RNA polymerase II elongation complex by preventing formation of DNA:RNA hybrids behind the elongating polymerase. It functions in cotranscriptional formation of an export-competent messenger ribonucleoprotein particle (mRNP) by facilitating the loading of ATP-dependent RNA helicase SUB2 and the mRNA export factor YRA1 along the nascent mRNA. The protein is THO complex subunit 2 (THO2) of Saccharomyces cerevisiae (strain ATCC 204508 / S288c) (Baker's yeast).